A 197-amino-acid chain; its full sequence is Protein GrpE (197 aa).

The tract at residues 1 to 39 (MSSKEQKTPEGQAPEEIIMDQHEEIEAVEPEASAEQVDP) is disordered.

The protein belongs to the GrpE family. In terms of assembly, homodimer.

The protein resides in the cytoplasm. Participates actively in the response to hyperosmotic and heat shock by preventing the aggregation of stress-denatured proteins, in association with DnaK and GrpE. It is the nucleotide exchange factor for DnaK and may function as a thermosensor. Unfolded proteins bind initially to DnaJ; upon interaction with the DnaJ-bound protein, DnaK hydrolyzes its bound ATP, resulting in the formation of a stable complex. GrpE releases ADP from DnaK; ATP binding to DnaK triggers the release of the substrate protein, thus completing the reaction cycle. Several rounds of ATP-dependent interactions between DnaJ, DnaK and GrpE are required for fully efficient folding. This Escherichia coli O157:H7 (strain EC4115 / EHEC) protein is Protein GrpE.